Consider the following 834-residue polypeptide: MPRYPFRRFGFGALRRLLYLWVRSETINQSAFTLKIDRSKPVLYVLQQPSVSDLAVVDTECRKAGLPRPVMPVAVGDAIEPAAFFYLTPEPDWLGRQDKRGASPTLVRMLAAVGQNGLDDAQIIPVSVFWGQSPDSESSPWKLLFADNWAVTGRLRKLARILILGRKTRVQFSAPIHLRELVEQGKGHERTLRMVNRILRVHFRNLKTAVIGPDLSHRRNLVKGLLRAPLVRQAINEECESERISQEKAEGIALRYANEIASDFSYPVIRFLEVILSWFWNKLYEGVKVNHIERVQDVAQGNEIVYVPCHRSHIDYLLLSYLLFRNGLTPPHIAAGINLNMPVIGSILRRGGAFFMRRSFKGNQLYTAVFNEYLHTLFSRGFSTEYFVEGGRSRTGRMLHPRTGMLAITLRSFLRDSRRPIVFVPVYIGYERVLEGRTYLGELRGATKKKESIFDLFKVVGALKQRFGQVWVNFGEPIHLDQFLDRHQPDWQDQDLGPEYRPDWLPQTTNLLAKDVARHLNDAAAINPVNLVALALLSTSRQALDESALARILDLYLALLRKVPYSPSATLPDGDGQALIEYVKSMNLLAEQKDALGRILYLDEQNAVLATYYRNNVLHVFALPALIASFFQSNSRISREQLLRFARALYPYLQAELFIRWSLDELDAVIDQWLAALVEQGLLRQENDTFIRPAPSSRQYVLLILLARSVTQTLQRFYMAIALLLNAGQNALTAEELENLCTVMAQRLSILHGLNAPEFFDKSLFRHFIQTLLDLRVLRKDEAGKLSYHELLGELAEGAAKRVLPAEIRLSIRQVALERPAEEAAAESNDAAAN.

The short motif at 309–314 is the HXXXXD motif element; the sequence is CHRSHI.

Belongs to the GPAT/DAPAT family.

The protein resides in the cell inner membrane. The enzyme catalyses sn-glycerol 3-phosphate + an acyl-CoA = a 1-acyl-sn-glycero-3-phosphate + CoA. It functions in the pathway phospholipid metabolism; CDP-diacylglycerol biosynthesis; CDP-diacylglycerol from sn-glycerol 3-phosphate: step 1/3. The chain is Glycerol-3-phosphate acyltransferase from Pseudomonas aeruginosa (strain UCBPP-PA14).